We begin with the raw amino-acid sequence, 418 residues long: Serine hydroxymethyltransferase (418 aa).

(6S)-5,6,7,8-tetrahydrofolate is bound by residues Leu121 and 125-127 (GHL). Position 230 is an N6-(pyridoxal phosphate)lysine (Lys230). A (6S)-5,6,7,8-tetrahydrofolate-binding site is contributed by 356-358 (SPF).

The protein belongs to the SHMT family. As to quaternary structure, homodimer. It depends on pyridoxal 5'-phosphate as a cofactor.

Its subcellular location is the cytoplasm. It catalyses the reaction (6R)-5,10-methylene-5,6,7,8-tetrahydrofolate + glycine + H2O = (6S)-5,6,7,8-tetrahydrofolate + L-serine. It functions in the pathway one-carbon metabolism; tetrahydrofolate interconversion. The protein operates within amino-acid biosynthesis; glycine biosynthesis; glycine from L-serine: step 1/1. In terms of biological role, catalyzes the reversible interconversion of serine and glycine with tetrahydrofolate (THF) serving as the one-carbon carrier. This reaction serves as the major source of one-carbon groups required for the biosynthesis of purines, thymidylate, methionine, and other important biomolecules. Also exhibits THF-independent aldolase activity toward beta-hydroxyamino acids, producing glycine and aldehydes, via a retro-aldol mechanism. The polypeptide is Serine hydroxymethyltransferase (Shewanella piezotolerans (strain WP3 / JCM 13877)).